A 101-amino-acid polypeptide reads, in one-letter code: MIPGEYDIQPGDIELNAGRRTLALSVANTGDRPIQVGSHYHFFEVNDALAFDRPATRGMRLNIAAGTAVRFEPGQSREVELVELAGERRVYGFAGRVMGDL.

It belongs to the urease beta subunit family. Heterotrimer of UreA (gamma), UreB (beta) and UreC (alpha) subunits. Three heterotrimers associate to form the active enzyme.

Its subcellular location is the cytoplasm. The catalysed reaction is urea + 2 H2O + H(+) = hydrogencarbonate + 2 NH4(+). It functions in the pathway nitrogen metabolism; urea degradation; CO(2) and NH(3) from urea (urease route): step 1/1. This chain is Urease subunit beta, found in Pseudomonas paraeruginosa (strain DSM 24068 / PA7) (Pseudomonas aeruginosa (strain PA7)).